A 271-amino-acid chain; its full sequence is NAD kinase (271 aa).

Residue Asp64 is the Proton acceptor of the active site. Residues 64–65 (DG), Arg69, 132–133 (NE), Lys143, Arg160, Asp162, 173–178 (TAYAMS), Ala197, and Gln231 contribute to the NAD(+) site.

Belongs to the NAD kinase family. It depends on a divalent metal cation as a cofactor.

It localises to the cytoplasm. The catalysed reaction is NAD(+) + ATP = ADP + NADP(+) + H(+). Involved in the regulation of the intracellular balance of NAD and NADP, and is a key enzyme in the biosynthesis of NADP. Catalyzes specifically the phosphorylation on 2'-hydroxyl of the adenosine moiety of NAD to yield NADP. The chain is NAD kinase from Methanocorpusculum labreanum (strain ATCC 43576 / DSM 4855 / Z).